Here is a 121-residue protein sequence, read N- to C-terminus: Urotensin-2 (121 aa).

The first 19 residues, 1-19, serve as a signal peptide directing secretion; the sequence is MSKLVPCLLLLGCLGLLFA. Positions 20-106 are excised as a propeptide; the sequence is LPVPDSRKEP…HLLARIKKPY (87 aa). Cys115 and Cys120 are disulfide-bonded.

It belongs to the urotensin-2 family.

The protein localises to the secreted. Its function is as follows. Highly potent vasoconstrictor. The polypeptide is Urotensin-2 (UTS2) (Sus scrofa (Pig)).